Here is a 123-residue protein sequence, read N- to C-terminus: Large ribosomal subunit protein uL14c (123 aa).

It belongs to the universal ribosomal protein uL14 family. As to quaternary structure, part of the 50S ribosomal subunit.

It localises to the plastid. Its subcellular location is the chloroplast. Functionally, binds to 23S rRNA. The chain is Large ribosomal subunit protein uL14c from Brachypodium distachyon (Purple false brome).